The chain runs to 505 residues: L-carnitine/gamma-butyrobetaine antiporter (505 aa).

12 helical membrane passes run 10–30 (IEPK…WLTV), 51–71 (WGWA…WLVF), 92–112 (IFMM…SIEI), 143–163 (GPLP…FFFV), 195–215 (FYLV…TPLV), 231–251 (LDAI…ACGL), 263–283 (SYLS…SFIM), 316–336 (WTVF…IFLA), 347–367 (LCFG…TVLG), 403–423 (LSTA…VTLI), 446–466 (LLVR…LLAL), and 475–495 (AIIA…LSFI).

The protein belongs to the BCCT transporter (TC 2.A.15) family. CaiT subfamily. In terms of assembly, homotrimer.

Its subcellular location is the cell inner membrane. The enzyme catalyses 4-(trimethylamino)butanoate(in) + (R)-carnitine(out) = 4-(trimethylamino)butanoate(out) + (R)-carnitine(in). The protein operates within amine and polyamine metabolism; carnitine metabolism. Functionally, catalyzes the exchange of L-carnitine for gamma-butyrobetaine. This is L-carnitine/gamma-butyrobetaine antiporter from Salmonella gallinarum (strain 287/91 / NCTC 13346).